The chain runs to 387 residues: Prostatic acid phosphatase (387 aa).

Residues 1–34 (MRNAALLMTRATSLRLSLLLLLSFLPDLDGGVRA) form the signal peptide. Residue R45 coordinates substrate. H46 functions as the Nucleophile in the catalytic mechanism. R49 provides a ligand contact to substrate. An N-linked (GlcNAc...) asparagine glycan is attached at N96. Position 113 (R113) interacts with substrate. Intrachain disulfides connect C163-C374, C217-C315, and C349-C353. The N-linked (GlcNAc...) asparagine glycan is linked to N222. Position 291 (H291) interacts with substrate. Residue D292 is the Proton donor of the active site. An N-linked (GlcNAc...) asparagine glycan is attached at N335.

This sequence belongs to the histidine acid phosphatase family. As to quaternary structure, homodimer; dimer formation is required for phosphatase activity.

It localises to the secreted. It catalyses the reaction a phosphate monoester + H2O = an alcohol + phosphate. The catalysed reaction is 1-(9Z-octadecenoyl)-sn-glycero-3-phosphate + H2O = 1-(9Z-octadecenoyl)-sn-glycerol + phosphate. It carries out the reaction O-phospho-L-tyrosyl-[protein] + H2O = L-tyrosyl-[protein] + phosphate. Functionally, a non-specific tyrosine phosphatase that dephosphorylates a diverse number of substrates under acidic conditions (pH 4-6) including alkyl, aryl, and acyl orthophosphate monoesters and phosphorylated proteins. Has lipid phosphatase activity and inactivates lysophosphatidic acid in seminal plasma. This is Prostatic acid phosphatase (ACP3) from Bos taurus (Bovine).